The sequence spans 440 residues: Methionine aminopeptidase 2-2 (440 aa).

Residues 1–102 form a disordered region; it reads MAAQVPTEAL…KGQEEEYRDE (102 aa). Acidic residues predominate over residues 36–46; that stretch reads DSDDSDEEGEE. A compositionally biased stretch (basic residues) spans 56 to 70; sequence AKKKKKNKKKKKKKS. Residue H194 coordinates substrate. 3 residues coordinate a divalent metal cation: D214, D225, and H294. H302 is a binding site for substrate. Residues E327 and E421 each coordinate a divalent metal cation.

This sequence belongs to the peptidase M24A family. Methionine aminopeptidase eukaryotic type 2 subfamily. Co(2+) serves as cofactor. Requires Zn(2+) as cofactor. Mn(2+) is required as a cofactor. The cofactor is Fe(2+).

The protein localises to the cytoplasm. The enzyme catalyses Release of N-terminal amino acids, preferentially methionine, from peptides and arylamides.. In terms of biological role, cotranslationally removes the N-terminal methionine from nascent proteins. The N-terminal methionine is often cleaved when the second residue in the primary sequence is small and uncharged (Met-Ala-, Cys, Gly, Pro, Ser, Thr, or Val). This is Methionine aminopeptidase 2-2 from Colletotrichum graminicola (strain M1.001 / M2 / FGSC 10212) (Maize anthracnose fungus).